The sequence spans 791 residues: Nuclear cap-binding protein subunit 1 (791 aa).

Basic and acidic residues predominate over residues 1 to 14; sequence MSRRRHSDENDGGP. Positions 1-24 are disordered; that stretch reads MSRRRHSDENDGGPHHKRRKTSEP. In terms of domain architecture, MIF4G spans 28-240; sequence EDRLESLICR…CLWAQIQKLK (213 aa). The stretch at 641–714 forms a coiled coil; the sequence is LHSTIRKMNK…SEQKNLFLVI (74 aa). A disordered region spans residues 668 to 687; that stretch reads KQHKHRDSDDNDEDSGRKDG.

Belongs to the NCBP1 family. Component of the nuclear cap-binding complex (CBC), a heterodimer composed of ncbp1/cbp80 and ncbp2/cbp20 that interacts with m7GpppG-capped RNA. Component of an alternative nuclear cap-binding complex (CBC) composed of ncbp1/cbp80 and ncbp3.

Its subcellular location is the nucleus. It is found in the cytoplasm. In terms of biological role, component of the cap-binding complex (CBC), which binds cotranscriptionally to the 5'-cap of pre-mRNAs and is involved in various processes such as pre-mRNA splicing, translation regulation, nonsense-mediated mRNA decay, RNA-mediated gene silencing (RNAi) by microRNAs (miRNAs) and mRNA export. The CBC complex is involved in mRNA export from the nucleus, leading to the recruitment of the mRNA export machinery to the 5'-end of mRNA and to mRNA export in a 5' to 3' direction through the nuclear pore. The CBC complex is also involved in mediating U snRNA and intronless mRNAs export from the nucleus. The CBC complex is essential for a pioneer round of mRNA translation, before steady state translation when the CBC complex is replaced by cytoplasmic cap-binding protein eIF4E. The pioneer round of mRNA translation mediated by the CBC complex plays a central role in nonsense-mediated mRNA decay (NMD), NMD only taking place in mRNAs bound to the CBC complex, but not on eIF4E-bound mRNAs. The CBC complex enhances NMD in mRNAs containing at least one exon-junction complex (EJC), promoting the interaction between UPF1 and UPF2. The CBC complex is also involved in 'failsafe' NMD, which is independent of the EJC complex, while it does not participate in Staufen-mediated mRNA decay (SMD). During cell proliferation, the CBC complex is also involved in microRNAs (miRNAs) biogenesis via its interaction with SRRT/ARS2 and is required for miRNA-mediated RNA interference. The CBC complex also acts as a negative regulator of parn, thereby acting as an inhibitor of mRNA deadenylation. In the CBC complex, ncbp1/cbp80 does not bind directly capped RNAs (m7GpppG-capped RNA) but is required to stabilize the movement of the N-terminal loop of ncbp2/cbp20 and lock the CBC into a high affinity cap-binding state with the cap structure. Associates with NCBP3 to form an alternative cap-binding complex (CBC) which plays a key role in mRNA export. The conventional CBC with NCBP2 binds both small nuclear RNA (snRNA) and messenger (mRNA) and is involved in their export from the nucleus whereas the alternative CBC with NCBP3 does not bind snRNA and associates only with mRNA thereby playing a role only in mRNA export. The protein is Nuclear cap-binding protein subunit 1 (ncbp1) of Xenopus tropicalis (Western clawed frog).